Reading from the N-terminus, the 355-residue chain is SH3 domain-containing protein Dlish (355 aa).

3 consecutive SH3 domains span residues 57 to 117 (SPDS…PCNT), 183 to 243 (EPSG…PADS), and 287 to 352 (YHGT…PPAM).

As to quaternary structure, interacts with dachs (via C-terminus); the interaction is direct. Interacts (via N-terminus including SH3 domain 1) with palmitoyltransferase app; this leads to palmitoylation of Dlish by app. Also interacts with dco, ft, ft-regulated E3 ubiquitin ligase Fbxl7, F-box protein slmb and SCF E3 ubiquitin-protein ligase complex component Cul1. Post-translationally, palmitoylated by app.

Its subcellular location is the cytoplasm. It localises to the cell cortex. Functionally, required for the apical cell cortex localization, total cellular level and full activity of dachs. This Drosophila melanogaster (Fruit fly) protein is SH3 domain-containing protein Dlish.